We begin with the raw amino-acid sequence, 392 residues long: Chorismate synthase (392 aa).

NADP(+) is bound by residues arginine 40 and arginine 46. Residues 135-137 (RAS), 256-257 (QA), glycine 300, 315-319 (KPIAT), and arginine 341 contribute to the FMN site.

The protein belongs to the chorismate synthase family. As to quaternary structure, homotetramer. It depends on FMNH2 as a cofactor.

It catalyses the reaction 5-O-(1-carboxyvinyl)-3-phosphoshikimate = chorismate + phosphate. Its pathway is metabolic intermediate biosynthesis; chorismate biosynthesis; chorismate from D-erythrose 4-phosphate and phosphoenolpyruvate: step 7/7. Its function is as follows. Catalyzes the anti-1,4-elimination of the C-3 phosphate and the C-6 proR hydrogen from 5-enolpyruvylshikimate-3-phosphate (EPSP) to yield chorismate, which is the branch point compound that serves as the starting substrate for the three terminal pathways of aromatic amino acid biosynthesis. This reaction introduces a second double bond into the aromatic ring system. The protein is Chorismate synthase of Nocardioides sp. (strain ATCC BAA-499 / JS614).